We begin with the raw amino-acid sequence, 622 residues long: Palmitoyltransferase ZDHHC17 (622 aa).

The Cytoplasmic portion of the chain corresponds to 1–294; it reads MADGPDEYDT…LKADKEFRQK (294 aa). The segment at 1–295 is necessary and sufficient for interaction with DNAJC5 and SNAP25; it reads MADGPDEYDT…KADKEFRQKV (295 aa). ANK repeat units follow at residues 41–76, 79–108, 113–142, 146–175, 179–209, 214–243, and 247–276; these read THVDDYSTWDIVKATQYGIYERCRELVEAGYDVRQP, ENVTLLHWAAINNRIDLVKYYISKGAIVDQ, LNSTPLHWATRQGHLSMVVQLMKYGADPSL, EGCSCIHLAAQFGHTSIVAYLIAKGQDVDM, NGMTPLMWAAYRTHSVDPTRLLLTFNVSVNL, HKNTALHWAVLAGNTTVISLLLEAGGNVDA, and KGESALDLAKQRKNVWMINHLQEARQAKGY. Helical transmembrane passes span 295 to 315 and 316 to 336; these read VMLGTPFLVIWLVGFIADLNI and DSWLIKGLMYGGVWATVQFLS. At 337 to 347 the chain is on the lumenal side; it reads KSFFDHSMHSA. A helical transmembrane segment spans residues 348–368; that stretch reads LPLGIYLATKFWMYVTWFFWF. Over 369–371 the chain is Cytoplasmic; the sequence is WND. A helical membrane pass occupies residues 372 to 392; that stretch reads LSFLSIHLPFLANSVALFYNF. The Lumenal portion of the chain corresponds to 393–470; the sequence is GKSWKSDPGI…GNCVGAGNHR (78 aa). In terms of domain architecture, DHHC spans 427 to 477; it reads IFCSTCLIRKPVRSKHCGVCNRCIAKFDHHCPWVGNCVGAGNHRYFMGYLF. Catalysis depends on cysteine 457, which acts as the S-palmitoyl cysteine intermediate. Residues 471 to 491 form a helical membrane-spanning segment; that stretch reads YFMGYLFFLLFMICWMIYGCV. The Cytoplasmic portion of the chain corresponds to 492-506; sequence SYWGLHCETTYTKDG. Residues 507–526 form a helical membrane-spanning segment; that stretch reads FWTYITQIATCSPWMFWMFL. At 527–529 the chain is on the lumenal side; it reads NSV. Residues 530-552 traverse the membrane as a helical segment; sequence FHFMWVAVLLMCQMYQITCLGIT. Residues 553-622 lie on the Cytoplasmic side of the membrane; the sequence is TNERMNARRY…QISGSGYQLV (70 aa).

Belongs to the DHHC palmitoyltransferase family. AKR/ZDHHC17 subfamily. As to quaternary structure, interacts (via ANK repeats) with numerous proteins (via the consensus sequence motif [VIAP]-[VIT]-x-x-Q-P). Interacts (via ANK repeats) with CLIP3. Interacts (via ANK repeats) with HTT. Interacts (via ANK repeats) with DNAJC5 (via C-terminus). Interacts (via ANK repeats) with MAP6. Interacts (via ANK repeats) with SNAP23. Interacts (via ANK repeats) with SNAP25. Interacts (via ANK repeats) with EVL. Interacts with SPRED1 and SPRED3. Interacts with GPM6A and OPTN. May interact (via ANK repeats) with SPRED2. May interact with NTRK1; may regulate its localization and function. Post-translationally, autopalmitoylated. Autopalmitoylation has a regulatory role in ZDHHC17-mediated Mg(2+) transport.

It localises to the golgi apparatus membrane. The protein resides in the cytoplasmic vesicle membrane. It is found in the presynaptic cell membrane. The enzyme catalyses L-cysteinyl-[protein] + hexadecanoyl-CoA = S-hexadecanoyl-L-cysteinyl-[protein] + CoA. The catalysed reaction is L-cysteinyl-[protein] + tetradecanoyl-CoA = S-tetradecanoyl-L-cysteinyl-[protein] + CoA. It carries out the reaction L-cysteinyl-[protein] + octadecanoyl-CoA = S-octadecanoyl-L-cysteinyl-[protein] + CoA. In terms of biological role, palmitoyltransferase that catalyzes the addition of palmitate onto various protein substrates and is involved in a variety of cellular processes. Has no stringent fatty acid selectivity and in addition to palmitate can also transfer onto target proteins myristate from tetradecanoyl-CoA and stearate from octadecanoyl-CoA. Palmitoyltransferase specific for a subset of neuronal proteins, including SNAP25, DLG4/PSD95, GAD2, SYT1 and HTT. Also palmitoylates neuronal protein GPM6A as well as SPRED1 and SPRED3. Could also play a role in axonogenesis through the regulation of NTRK1 and the downstream ERK1/ERK2 signaling cascade. May be involved in the sorting or targeting of critical proteins involved in the initiating events of endocytosis at the plasma membrane. May play a role in Mg(2+) transport. Could also palmitoylate DNAJC5 and regulate its localization to the Golgi membrane. Palmitoylates CASP6, thereby preventing its dimerization and subsequent activation. This Rattus norvegicus (Rat) protein is Palmitoyltransferase ZDHHC17.